The primary structure comprises 273 residues: NH(3)-dependent NAD(+) synthetase (273 aa).

47–54 (GISGGQDS) provides a ligand contact to ATP. Aspartate 53 provides a ligand contact to Mg(2+). Arginine 139 provides a ligand contact to deamido-NAD(+). Threonine 159 is an ATP binding site. Glutamate 164 lines the Mg(2+) pocket. Positions 172 and 179 each coordinate deamido-NAD(+). The ATP site is built by lysine 188 and threonine 210. Deamido-NAD(+) is bound at residue 259 to 260 (HK).

The protein belongs to the NAD synthetase family. Homodimer.

It carries out the reaction deamido-NAD(+) + NH4(+) + ATP = AMP + diphosphate + NAD(+) + H(+). It functions in the pathway cofactor biosynthesis; NAD(+) biosynthesis; NAD(+) from deamido-NAD(+) (ammonia route): step 1/1. Functionally, catalyzes the ATP-dependent amidation of deamido-NAD to form NAD. Uses ammonia as a nitrogen source. In Staphylococcus aureus (strain MRSA252), this protein is NH(3)-dependent NAD(+) synthetase.